A 315-amino-acid chain; its full sequence is MTFQDLILTLQKFWADRGCLIVQPYNSEVGAGTFNPATFLRALGPEPWNVAFVEPSRRPADGRYGENPNRMQQFHQFQVILKPSPIDIQDLYLESLRAIGTNPLDHDVRFLEDDWESPTLGAWGLGWQVWIDGLEISQFTYFQQIGGIDCRPVSGELTYGLERIAMYLQDKDSIYDVVYSDRGGKIVRYGDIYQRAEWEWSTYNFEEADIAEHFAAFDVCEAEVKRLLYRGADPAAKGAAIDPKKALVLPAYDFVVKAAHRFNVLDARGAISVTERQRFIGRVRALARAVAETYVAQREALGYPLLGEQQAKAAE.

The protein belongs to the class-II aminoacyl-tRNA synthetase family. As to quaternary structure, tetramer of two alpha and two beta subunits.

It is found in the cytoplasm. The enzyme catalyses tRNA(Gly) + glycine + ATP = glycyl-tRNA(Gly) + AMP + diphosphate. This is Glycine--tRNA ligase alpha subunit from Sorangium cellulosum (strain So ce56) (Polyangium cellulosum (strain So ce56)).